Reading from the N-terminus, the 370-residue chain is uncharacterized protein (370 aa).

An N6-(pyridoxal phosphate)lysine modification is found at lysine 207.

It belongs to the class-V pyridoxal-phosphate-dependent aminotransferase family. The cofactor is pyridoxal 5'-phosphate.

This is an uncharacterized protein from Bacillus subtilis (strain 168).